Here is a 153-residue protein sequence, read N- to C-terminus: MNVGTAHSEVNPNTRVMNSRGIWLSYVLAIGLLHIVLLSIPFVSVPVVWTLTNLIHNMGMYIFLHTVKGTPFETPDQGKARLLTHWEQMDYGVQFTASRKFLTITPIVLYFLTSFYTKYDQIHFVLNTVSLMSVLIPKLPQLHGVRIFGINKY.

An important for ceramide level-sensing region spans residues Met-1 to Met-17. Over Met-1–Gly-21 the chain is Cytoplasmic. A run of 2 helical transmembrane segments spans residues Ile-22–Ser-44 and Val-45–Phe-63. The Cytoplasmic portion of the chain corresponds to Leu-64–Lys-100. A helical transmembrane segment spans residues Phe-101–Thr-117. Topologically, residues Lys-118–Gln-121 are lumenal. A helical transmembrane segment spans residues Ile-122–Leu-139. Residue Pro-137 is modified to Hydroxyproline. Residues Pro-140–Tyr-153 lie on the Cytoplasmic side of the membrane.

Belongs to the ORM family. Ceramide-sensitive subunit of the serine palmitoyltransferase (SPT) complex, which is also composed of SPTLC1, SPTLC2/3 and SPTSSA/B. Post-translationally, when hydroxylated at Pro-137, ubiquitinated via 'Lys-48'-linkage, leading to proteasomal degradation. In endothelial cells, ORMDL3 proteasomal degradation is controlled by the sphingosine 1-phosphate receptor signaling pathway. As to expression, widely expressed. Expressed in adult and fetal heart, brain, lung, liver, skeletal muscle and kidney. Expressed in adult pancreas and placenta and in fetal spleen and thymus.

The protein localises to the endoplasmic reticulum membrane. In terms of biological role, plays an essential role in the homeostatic regulation of sphingolipid de novo biosynthesis by modulating the activity of the serine palmitoyltransferase (SPT) in response to ceramide levels. When complexed to SPT, the binding of ceramides to its N-terminus stabilizes a conformation that block SPT substrate entry, hence preventing SPT catalytic activity. Through this mechanism, maintains ceramide levels at sufficient concentrations for the production of complex sphingolipids, but which prevents the accumulation of ceramides to levels that trigger apoptosis. This Homo sapiens (Human) protein is ORM1-like protein 3 (ORMDL3).